Here is a 363-residue protein sequence, read N- to C-terminus: Spermidine/putrescine import ATP-binding protein PotA (363 aa).

The ABC transporter domain occupies 5–236 (IKLKHVRKEY…PVNDFVARFI (232 aa)). 38-45 (GPSGSGKT) provides a ligand contact to ATP.

This sequence belongs to the ABC transporter superfamily. Spermidine/putrescine importer (TC 3.A.1.11.1) family. In terms of assembly, the complex is composed of two ATP-binding proteins (PotA), two transmembrane proteins (PotB and PotC) and a solute-binding protein (PotD).

The protein resides in the cell membrane. The enzyme catalyses ATP + H2O + polyamine-[polyamine-binding protein]Side 1 = ADP + phosphate + polyamineSide 2 + [polyamine-binding protein]Side 1.. Functionally, part of the ABC transporter complex PotABCD involved in spermidine/putrescine import. Responsible for energy coupling to the transport system. The polypeptide is Spermidine/putrescine import ATP-binding protein PotA (Lactobacillus johnsonii (strain CNCM I-12250 / La1 / NCC 533)).